Reading from the N-terminus, the 99-residue chain is Large ribosomal subunit protein uL23 (99 aa).

It belongs to the universal ribosomal protein uL23 family. Part of the 50S ribosomal subunit. Contacts protein L29, and trigger factor when it is bound to the ribosome.

In terms of biological role, one of the early assembly proteins it binds 23S rRNA. One of the proteins that surrounds the polypeptide exit tunnel on the outside of the ribosome. Forms the main docking site for trigger factor binding to the ribosome. This is Large ribosomal subunit protein uL23 from Francisella tularensis subsp. holarctica (strain OSU18).